The sequence spans 213 residues: Imidazole glycerol phosphate synthase subunit HisH (213 aa).

Residues Thr-8–Pro-213 enclose the Glutamine amidotransferase type-1 domain. Residue Cys-91 is the Nucleophile of the active site. Residues His-193 and Glu-195 contribute to the active site.

In terms of assembly, heterodimer of HisH and HisF.

It localises to the cytoplasm. The catalysed reaction is 5-[(5-phospho-1-deoxy-D-ribulos-1-ylimino)methylamino]-1-(5-phospho-beta-D-ribosyl)imidazole-4-carboxamide + L-glutamine = D-erythro-1-(imidazol-4-yl)glycerol 3-phosphate + 5-amino-1-(5-phospho-beta-D-ribosyl)imidazole-4-carboxamide + L-glutamate + H(+). It carries out the reaction L-glutamine + H2O = L-glutamate + NH4(+). It participates in amino-acid biosynthesis; L-histidine biosynthesis; L-histidine from 5-phospho-alpha-D-ribose 1-diphosphate: step 5/9. IGPS catalyzes the conversion of PRFAR and glutamine to IGP, AICAR and glutamate. The HisH subunit catalyzes the hydrolysis of glutamine to glutamate and ammonia as part of the synthesis of IGP and AICAR. The resulting ammonia molecule is channeled to the active site of HisF. The polypeptide is Imidazole glycerol phosphate synthase subunit HisH (Zymomonas mobilis subsp. mobilis (strain ATCC 31821 / ZM4 / CP4)).